The sequence spans 267 residues: uncharacterized protein (267 aa).

This is an uncharacterized protein from Escherichia coli (strain K12).